The chain runs to 231 residues: U1 small nuclear ribonucleoprotein C-1 (231 aa).

The Matrin-type zinc-finger motif lies at 4–36 (YYCDYCDTYLTHDSPSVRKQHNAGYKHKANVRT). Composition is skewed to pro residues over residues 117–127 (APGIPGYPGGP), 134–159 (GAPPGSMPQPGAPPGSMPQPGAPPGS), and 167–178 (LPRPPTLPPPTS). Residues 117 to 231 (APGIPGYPGG…SYAQPSEGNH (115 aa)) form a disordered region. A compositionally biased stretch (low complexity) spans 181–193 (PGAPIPNSAAPPA). Over residues 199-217 (PPAPAGPTSGAPPAPPTAP) the composition is skewed to pro residues.

It belongs to the U1 small nuclear ribonucleoprotein C family. In terms of assembly, U1 snRNP is composed of the 7 core Sm proteins B/B', D1, D2, D3, E, F and G that assemble in a heptameric protein ring on the Sm site of the small nuclear RNA to form the core snRNP, and at least 3 U1 snRNP-specific proteins U1-70K, U1-A and U1-C. U1-C interacts with U1 snRNA and the 5' splice-site region of the pre-mRNA.

Its subcellular location is the nucleus. Its function is as follows. Component of the spliceosomal U1 snRNP, which is essential for recognition of the pre-mRNA 5' splice-site and the subsequent assembly of the spliceosome. U1-C is directly involved in initial 5' splice-site recognition for both constitutive and regulated alternative splicing. The interaction with the 5' splice-site seems to precede base-pairing between the pre-mRNA and the U1 snRNA. Stimulates commitment or early (E) complex formation by stabilizing the base pairing of the 5' end of the U1 snRNA and the 5' splice-site region. In Sorghum bicolor (Sorghum), this protein is U1 small nuclear ribonucleoprotein C-1.